Consider the following 77-residue polypeptide: Translational regulator CsrA (77 aa).

Belongs to the CsrA/RsmA family. As to quaternary structure, homodimer; the beta-strands of each monomer intercalate to form a hydrophobic core, while the alpha-helices form wings that extend away from the core.

The protein localises to the cytoplasm. Functionally, a translational regulator that binds mRNA to regulate translation initiation and/or mRNA stability. Usually binds in the 5'-UTR at or near the Shine-Dalgarno sequence preventing ribosome-binding, thus repressing translation. Its main target seems to be the major flagellin gene, while its function is anatagonized by FliW. This Desulfitobacterium hafniense (strain DSM 10664 / DCB-2) protein is Translational regulator CsrA.